Here is a 197-residue protein sequence, read N- to C-terminus: Probable GTP-binding protein EngB (197 aa).

The region spanning 22 to 197 (TGVEVAFAGR…FKEKLDTWYQ (176 aa)) is the EngB-type G domain. GTP contacts are provided by residues 30 to 37 (GRSNAGKS), 57 to 61 (GRTQL), 75 to 78 (DLPG), 142 to 145 (TKAD), and 177 to 179 (FSS). Mg(2+)-binding residues include Ser-37 and Thr-59.

It belongs to the TRAFAC class TrmE-Era-EngA-EngB-Septin-like GTPase superfamily. EngB GTPase family. The cofactor is Mg(2+).

Its function is as follows. Necessary for normal cell division and for the maintenance of normal septation. The chain is Probable GTP-binding protein EngB from Francisella tularensis subsp. holarctica (strain FTNF002-00 / FTA).